A 78-amino-acid polypeptide reads, in one-letter code: Glycophorin-E (78 aa).

Positions 1-19 are cleaved as a signal peptide; it reads MYGKIIFVLLLSGIVSISA. Residues 20-52 are Extracellular-facing; it reads SSTTGVAMHTSTSSSVTKSYISSQTNGITLINW. Residues 53-73 form a helical membrane-spanning segment; the sequence is WAMARVIFEVMLVVVGMIILI. Over 74 to 78 the chain is Cytoplasmic; the sequence is SYCIR.

It belongs to the glycophorin-A family. In terms of processing, the N-terminal extracellular domain is heavily glycosylated on serine and threonine residues. As to expression, erythrocytes.

The protein resides in the membrane. Its function is as follows. This protein is a minor sialoglycoprotein in human erythrocyte membranes. The chain is Glycophorin-E (GYPE) from Homo sapiens (Human).